The following is a 346-amino-acid chain: N-acetyl-gamma-glutamyl-phosphate reductase (346 aa).

C150 is a catalytic residue.

This sequence belongs to the NAGSA dehydrogenase family. Type 1 subfamily.

The protein resides in the cytoplasm. It catalyses the reaction N-acetyl-L-glutamate 5-semialdehyde + phosphate + NADP(+) = N-acetyl-L-glutamyl 5-phosphate + NADPH + H(+). It functions in the pathway amino-acid biosynthesis; L-arginine biosynthesis; N(2)-acetyl-L-ornithine from L-glutamate: step 3/4. Functionally, catalyzes the NADPH-dependent reduction of N-acetyl-5-glutamyl phosphate to yield N-acetyl-L-glutamate 5-semialdehyde. This Brevibacillus brevis (strain 47 / JCM 6285 / NBRC 100599) protein is N-acetyl-gamma-glutamyl-phosphate reductase.